Consider the following 127-residue polypeptide: Small ribosomal subunit protein bS6 (127 aa).

Residues 102-127 (IMQGAEKGKSSRKEKVDAEAEASEEA) form a disordered region. A compositionally biased stretch (basic and acidic residues) spans 107 to 119 (EKGKSSRKEKVDA).

This sequence belongs to the bacterial ribosomal protein bS6 family.

Its function is as follows. Binds together with bS18 to 16S ribosomal RNA. The chain is Small ribosomal subunit protein bS6 from Coxiella burnetii (strain CbuK_Q154) (Coxiella burnetii (strain Q154)).